A 397-amino-acid polypeptide reads, in one-letter code: 2,3-bisphosphoglycerate-independent phosphoglycerate mutase (397 aa).

It belongs to the BPG-independent phosphoglycerate mutase family. A-PGAM subfamily.

The enzyme catalyses (2R)-2-phosphoglycerate = (2R)-3-phosphoglycerate. It functions in the pathway carbohydrate degradation; glycolysis; pyruvate from D-glyceraldehyde 3-phosphate: step 3/5. In terms of biological role, catalyzes the interconversion of 2-phosphoglycerate and 3-phosphoglycerate. This Methanosarcina acetivorans (strain ATCC 35395 / DSM 2834 / JCM 12185 / C2A) protein is 2,3-bisphosphoglycerate-independent phosphoglycerate mutase.